The primary structure comprises 262 residues: Putative hydro-lyase ROP_32680 (262 aa).

It belongs to the D-glutamate cyclase family.

This is Putative hydro-lyase ROP_32680 from Rhodococcus opacus (strain B4).